The sequence spans 220 residues: MASRWMEWTCCGLWLFGKPTQKKYTQLFEEPSYKCSERVKQEINKGLPPGVSVGDLILGDKSTEALNQAHLLALQSNNITEYLARFNAAEIPASCQGIVSNQIDKLKAMQSVIWNAMISIATSNVELSDSGFQLLLDKQACENMTLMEMEKLATAISVDNTTNWAREISNIIITQPTHALPEAVPEKPEPIYDDPEELESTMLLQPTQQKKTTVTQQQIL.

The S-palmitoyl cysteine; by host moiety is linked to residue cysteine 11.

Belongs to the herpesviridae UL51 family. As to quaternary structure, oligomerizes. Interacts with UL7 homolog; this interaction mediates UL7 homolog incorporation to virions. Phosphorylated. Post-translationally, palmitoylation is necessary for Golgi localization.

It is found in the virion tegument. It localises to the host cytoplasm. Its subcellular location is the host Golgi apparatus. In terms of biological role, plays several roles during the time course of infection, including egress of virus particles from the perinuclear space and secondary envelopment of cytoplasmic capsids that bud into specific trans-Golgi network (TGN)-derived membranes. The sequence is that of Tegument protein UL51 homolog (55) from Connochaetes taurinus (Blue wildebeest).